Here is a 365-residue protein sequence, read N- to C-terminus: Uroporphyrinogen decarboxylase (365 aa).

Over residues 1–17 (MSANDSPSGQQTTTSAS) the composition is skewed to polar residues. The interval 1–20 (MSANDSPSGQQTTTSASLDA) is disordered. Substrate contacts are provided by residues 48–52 (RQAGR), aspartate 97, tyrosine 172, serine 227, and histidine 341.

Belongs to the uroporphyrinogen decarboxylase family. In terms of assembly, homodimer.

The protein localises to the cytoplasm. It carries out the reaction uroporphyrinogen III + 4 H(+) = coproporphyrinogen III + 4 CO2. It participates in porphyrin-containing compound metabolism; protoporphyrin-IX biosynthesis; coproporphyrinogen-III from 5-aminolevulinate: step 4/4. Its function is as follows. Catalyzes the decarboxylation of four acetate groups of uroporphyrinogen-III to yield coproporphyrinogen-III. This Streptomyces griseus subsp. griseus (strain JCM 4626 / CBS 651.72 / NBRC 13350 / KCC S-0626 / ISP 5235) protein is Uroporphyrinogen decarboxylase.